A 286-amino-acid chain; its full sequence is Glycine--tRNA ligase alpha subunit (286 aa).

It belongs to the class-II aminoacyl-tRNA synthetase family. In terms of assembly, tetramer of two alpha and two beta subunits.

It localises to the cytoplasm. It carries out the reaction tRNA(Gly) + glycine + ATP = glycyl-tRNA(Gly) + AMP + diphosphate. This is Glycine--tRNA ligase alpha subunit (glyQ) from Thermotoga maritima (strain ATCC 43589 / DSM 3109 / JCM 10099 / NBRC 100826 / MSB8).